The chain runs to 439 residues: tRNA(Ile)-lysidine synthase (439 aa).

25–30 contributes to the ATP binding site; it reads SGGLDS.

Belongs to the tRNA(Ile)-lysidine synthase family.

The protein resides in the cytoplasm. The catalysed reaction is cytidine(34) in tRNA(Ile2) + L-lysine + ATP = lysidine(34) in tRNA(Ile2) + AMP + diphosphate + H(+). Its function is as follows. Ligates lysine onto the cytidine present at position 34 of the AUA codon-specific tRNA(Ile) that contains the anticodon CAU, in an ATP-dependent manner. Cytidine is converted to lysidine, thus changing the amino acid specificity of the tRNA from methionine to isoleucine. The polypeptide is tRNA(Ile)-lysidine synthase (Edwardsiella ictaluri (strain 93-146)).